Here is a 372-residue protein sequence, read N- to C-terminus: Ketol-acid reductoisomerase (NADP(+)) (372 aa).

The interval 1–25 (MTETKTQTETETDEEEGTDTDTALD) is disordered. Residues 10–19 (TETDEEEGTD) are compositionally biased toward acidic residues. One can recognise a KARI N-terminal Rossmann domain in the interval 24 to 205 (LDTTIYYDDD…GCTRAGAIET (182 aa)). NADP(+) is bound by residues 49–52 (YGSQ), S75, S77, and 107–110 (DTVQ). Residue H131 is part of the active site. G157 lines the NADP(+) pocket. The 146-residue stretch at 206 to 351 (TFREETETDL…EPLRDLFAWS (146 aa)) folds into the KARI C-terminal knotted domain. D214, E218, E250, and E254 together coordinate Mg(2+). S275 lines the substrate pocket. The interval 351 to 372 (SDNEETNDESDVVSEPEAAADD) is disordered. A compositionally biased stretch (acidic residues) spans 352–372 (DNEETNDESDVVSEPEAAADD).

This sequence belongs to the ketol-acid reductoisomerase family. The cofactor is Mg(2+).

The catalysed reaction is (2R)-2,3-dihydroxy-3-methylbutanoate + NADP(+) = (2S)-2-acetolactate + NADPH + H(+). It catalyses the reaction (2R,3R)-2,3-dihydroxy-3-methylpentanoate + NADP(+) = (S)-2-ethyl-2-hydroxy-3-oxobutanoate + NADPH + H(+). The protein operates within amino-acid biosynthesis; L-isoleucine biosynthesis; L-isoleucine from 2-oxobutanoate: step 2/4. It participates in amino-acid biosynthesis; L-valine biosynthesis; L-valine from pyruvate: step 2/4. Involved in the biosynthesis of branched-chain amino acids (BCAA). Catalyzes an alkyl-migration followed by a ketol-acid reduction of (S)-2-acetolactate (S2AL) to yield (R)-2,3-dihydroxy-isovalerate. In the isomerase reaction, S2AL is rearranged via a Mg-dependent methyl migration to produce 3-hydroxy-3-methyl-2-ketobutyrate (HMKB). In the reductase reaction, this 2-ketoacid undergoes a metal-dependent reduction by NADPH to yield (R)-2,3-dihydroxy-isovalerate. The polypeptide is Ketol-acid reductoisomerase (NADP(+)) (Haloquadratum walsbyi (strain DSM 16790 / HBSQ001)).